Here is a 160-residue protein sequence, read N- to C-terminus: Large ribosomal subunit protein eL21 (160 aa).

This sequence belongs to the eukaryotic ribosomal protein eL21 family. Component of the large ribosomal subunit. Mature ribosomes consist of a small (40S) and a large (60S) subunit. The 40S subunit contains about 32 different proteins and 1 molecule of RNA (18S). The 60S subunit contains 45 different proteins and 3 molecules of RNA (25S, 5.8S and 5S).

It localises to the cytoplasm. In terms of biological role, component of the ribosome, a large ribonucleoprotein complex responsible for the synthesis of proteins in the cell. The small ribosomal subunit (SSU) binds messenger RNAs (mRNAs) and translates the encoded message by selecting cognate aminoacyl-transfer RNA (tRNA) molecules. The large subunit (LSU) contains the ribosomal catalytic site termed the peptidyl transferase center (PTC), which catalyzes the formation of peptide bonds, thereby polymerizing the amino acids delivered by tRNAs into a polypeptide chain. The nascent polypeptides leave the ribosome through a tunnel in the LSU and interact with protein factors that function in enzymatic processing, targeting, and the membrane insertion of nascent chains at the exit of the ribosomal tunnel. The polypeptide is Large ribosomal subunit protein eL21 (Candida albicans (strain SC5314 / ATCC MYA-2876) (Yeast)).